Reading from the N-terminus, the 478-residue chain is MESQQLSNYPHISHGSACASVTSKEVHTNQDPLDVSASKIQEYDKASTKANSQQTTTPASSAVPENLHHASPQPASVPPPQNGPYPQQCMMTQNQANPSGWSFYGHPSMIPYTPYQMSPMYFPPGPQSQFPQYPSSVGTPLSTPSPESGNTFTDSSSADSDMTSTKKYVRPPPMLTSPNDFPNWVKTYIKFLQNSNLGGIIPTVNGKPVPPMLTSPNDFPNWVKTYIKFLQNSNLGGIIPTVNGKPVRQITDDELTFLYNTFQIFAPSQFLPTWVKDILSVDYTDIMKILSKSIEKMQSDTQEANDIVTLANLQYNGSTPADAFETKVTNIIDRLNNNGIHINNKVACQLIMRGLSGEYKFLRYTRHRHLNMTVAELFLDIHAIYEEQQGSRNSKPNYRRNPSDEKNDSRSYTNTTKPKVIARNPQKTNNSKSKTARAHNVSTSNNSPSTDNDSISKSTTEPIQLNNKHDLHLRPETY.

3 stretches are compositionally biased toward polar residues: residues 1-10 (MESQQLSNYP), 48-60 (TKAN…TPAS), and 127-152 (QSQF…GNTF). Disordered regions lie at residues 1–84 (MESQ…QNGP), 126–174 (PQSQ…PPPM), and 390–478 (GSRN…PETY). Over residues 153–165 (TDSSSADSDMTST) the composition is skewed to low complexity. The segment at 337–439 (NNGIHINNKV…NSKSKTARAH (103 aa)) is RNA-binding. The segment covering 440 to 456 (NVSTSNNSPSTDNDSIS) has biased composition (low complexity). Residues 457–466 (KSTTEPIQLN) are compositionally biased toward polar residues. Residues 467–478 (NKHDLHLRPETY) show a composition bias toward basic and acidic residues.

In terms of assembly, homotrimer.

It is found in the cytoplasm. Functionally, capsid protein (CA) is the structural component of the virus-like particle (VLP), forming the shell that encapsulates the retrotransposons dimeric RNA genome. The particles are assembled from trimer-clustered units and there are holes in the capsid shells that allow for the diffusion of macromolecules. CA also has nucleocapsid-like chaperone activity, promoting primer tRNA(i)-Met annealing to the multipartite primer-binding site (PBS), dimerization of Ty1 RNA and initiation of reverse transcription. This is Transposon Ty1-H Gag polyprotein (TY1A-H) from Saccharomyces cerevisiae (strain ATCC 204508 / S288c) (Baker's yeast).